A 245-amino-acid chain; its full sequence is MIIPALDLIDGTVVRLHQGDYGKQRDYGNDPLPRLQDYAAQGAEVLHLVDLTGAKDPAKRQIPLIKTLVAGVNVPVQVGGGVRSEEDVAALLEAGVARVVVGSTAVKSPEMVKGWFERFGTDALVLALDVRIDEQGNKQVAVSGWQENSGVSLEQLVETYLPVGLKHVLCTDISRDGTLAGSNVSLYEEVCARYPQVAFQSSGGIGDIDDVAALRGTGVRGVIVGRALLEGKFTVKEAIACWQNV.

Aspartate 7 functions as the Proton acceptor in the catalytic mechanism. The active-site Proton donor is aspartate 129.

The protein belongs to the HisA/HisF family.

The protein localises to the cytoplasm. It catalyses the reaction 1-(5-phospho-beta-D-ribosyl)-5-[(5-phospho-beta-D-ribosylamino)methylideneamino]imidazole-4-carboxamide = 5-[(5-phospho-1-deoxy-D-ribulos-1-ylimino)methylamino]-1-(5-phospho-beta-D-ribosyl)imidazole-4-carboxamide. The protein operates within amino-acid biosynthesis; L-histidine biosynthesis; L-histidine from 5-phospho-alpha-D-ribose 1-diphosphate: step 4/9. The sequence is that of 1-(5-phosphoribosyl)-5-[(5-phosphoribosylamino)methylideneamino] imidazole-4-carboxamide isomerase from Escherichia coli (strain 55989 / EAEC).